A 433-amino-acid chain; its full sequence is MKFVDSADLIIKAGKGGDGAVSFLHALFVPNGGPNGGDGGDGGSVYFQGDEGKHSLLDLKLQKKYSAQDGFKGDIKNMHGANGEDKIIKVPVGTILYDKKTNTILADINENNKLVLIAKGGKGGKGNARFANSRNKAPTIFEAGELGQEFEIRAELKVLADVGFVGLPNAGKSTLLRAISNSKPVVADYPFTTINPQLGVARTKNNDTFIVADLPGLIQGASLGKGLGHQFLKHIERCLVICHIIDASGNFGSEDIIKNYELIRNELKAYNLNLEKRAEIIVLNKMDLDEAQLNLLDEKIINYFKNKKVVQISGLKKENIDQLLFMIYEELKIAKKQPLWELDKNNDQDEIAIYKFEEQKEDIQVYNKGNNRWEIAGETIFKIYQKFPIWTEDNLLMFNEKLKETGVYETLVKKGIKKGDFVKVFDYELEWTD.

One can recognise an Obg domain in the interval 1-159 (MKFVDSADLI…FEIRAELKVL (159 aa)). The OBG-type G domain occupies 160–332 (ADVGFVGLPN…LLFMIYEELK (173 aa)). GTP is bound by residues 166–173 (GLPNAGKS), 191–195 (FTTIN), 213–216 (DLPG), 284–287 (NKMD), and 313–315 (SGL). The Mg(2+) site is built by Ser173 and Thr193. An OCT domain is found at 355–433 (KFEEQKEDIQ…VFDYELEWTD (79 aa)).

It belongs to the TRAFAC class OBG-HflX-like GTPase superfamily. OBG GTPase family. In terms of assembly, monomer. The cofactor is Mg(2+).

Its subcellular location is the cytoplasm. Functionally, an essential GTPase which binds GTP, GDP and possibly (p)ppGpp with moderate affinity, with high nucleotide exchange rates and a fairly low GTP hydrolysis rate. Plays a role in control of the cell cycle, stress response, ribosome biogenesis and in those bacteria that undergo differentiation, in morphogenesis control. In Mycoplasma capricolum subsp. capricolum (strain California kid / ATCC 27343 / NCTC 10154), this protein is GTPase Obg.